The chain runs to 248 residues: 2,3-bisphosphoglycerate-dependent phosphoglycerate mutase (248 aa).

Substrate-binding positions include Arg8–Asn15, Thr21–Gly22, Arg60, Glu87–Tyr90, Lys98, Arg114–Arg115, and Gly183–Asn184. Residue His9 is the Tele-phosphohistidine intermediate of the active site. Residue Glu87 is the Proton donor/acceptor of the active site.

It belongs to the phosphoglycerate mutase family. BPG-dependent PGAM subfamily.

The catalysed reaction is (2R)-2-phosphoglycerate = (2R)-3-phosphoglycerate. It functions in the pathway carbohydrate degradation; glycolysis; pyruvate from D-glyceraldehyde 3-phosphate: step 3/5. Catalyzes the interconversion of 2-phosphoglycerate and 3-phosphoglycerate. This Borrelia turicatae (strain 91E135) protein is 2,3-bisphosphoglycerate-dependent phosphoglycerate mutase.